A 224-amino-acid chain; its full sequence is Urease accessory protein UreF (224 aa).

The protein belongs to the UreF family. As to quaternary structure, ureD, UreF and UreG form a complex that acts as a GTP-hydrolysis-dependent molecular chaperone, activating the urease apoprotein by helping to assemble the nickel containing metallocenter of UreC. The UreE protein probably delivers the nickel.

The protein resides in the cytoplasm. Functionally, required for maturation of urease via the functional incorporation of the urease nickel metallocenter. This is Urease accessory protein UreF from Methylorubrum populi (strain ATCC BAA-705 / NCIMB 13946 / BJ001) (Methylobacterium populi).